A 466-amino-acid chain; its full sequence is L-seryl-tRNA(Sec) selenium transferase (466 aa).

N6-(pyridoxal phosphate)lysine is present on Lys293.

Belongs to the SelA family. Pyridoxal 5'-phosphate is required as a cofactor.

Its subcellular location is the cytoplasm. The catalysed reaction is L-seryl-tRNA(Sec) + selenophosphate + H(+) = L-selenocysteinyl-tRNA(Sec) + phosphate. It functions in the pathway aminoacyl-tRNA biosynthesis; selenocysteinyl-tRNA(Sec) biosynthesis; selenocysteinyl-tRNA(Sec) from L-seryl-tRNA(Sec) (bacterial route): step 1/1. Its function is as follows. Converts seryl-tRNA(Sec) to selenocysteinyl-tRNA(Sec) required for selenoprotein biosynthesis. This is L-seryl-tRNA(Sec) selenium transferase from Desulfotalea psychrophila (strain LSv54 / DSM 12343).